The primary structure comprises 273 residues: Manganese catalase (273 aa).

E35 contacts Mn(2+). Residues D57 and D61 each coordinate Ca(2+). Positions 66, 69, 149, and 182 each coordinate Mn(2+). Ca(2+)-binding residues include N220, S222, and G224. The interval 254 to 273 (EKPELKPAPPCVHNTLPGRE) is disordered.

This sequence belongs to the manganese catalase family. Homohexamer. Ca(2+) is required as a cofactor. It depends on Mn(2+) as a cofactor.

The catalysed reaction is 2 H2O2 = O2 + 2 H2O. Its activity is regulated as follows. Inhibited in the presence of EDTA. Resistant to inhibition by sodium azide. Catalyzes the decomposition of hydrogen peroxide into water and oxygen. No significant activity could be detected with any of the other tested substrates, including glutathione, pyrogallol, NADH, NADPH and o-dianisidine. The protein is Manganese catalase of Bacillus subtilis.